Consider the following 84-residue polypeptide: Small ribosomal subunit protein uS17 (84 aa).

This sequence belongs to the universal ribosomal protein uS17 family. Part of the 30S ribosomal subunit.

Functionally, one of the primary rRNA binding proteins, it binds specifically to the 5'-end of 16S ribosomal RNA. The polypeptide is Small ribosomal subunit protein uS17 (Pectobacterium atrosepticum (strain SCRI 1043 / ATCC BAA-672) (Erwinia carotovora subsp. atroseptica)).